The sequence spans 122 residues: Large ribosomal subunit protein uL14 (122 aa).

This sequence belongs to the universal ribosomal protein uL14 family. Part of the 50S ribosomal subunit. Forms a cluster with proteins L3 and L19. In the 70S ribosome, L14 and L19 interact and together make contacts with the 16S rRNA in bridges B5 and B8.

Binds to 23S rRNA. Forms part of two intersubunit bridges in the 70S ribosome. The protein is Large ribosomal subunit protein uL14 of Psychrobacter arcticus (strain DSM 17307 / VKM B-2377 / 273-4).